A 525-amino-acid polypeptide reads, in one-letter code: GMP synthase [glutamine-hydrolyzing] (525 aa).

Positions 11–200 constitute a Glutamine amidotransferase type-1 domain; it reads PVLVVDFGAQ…LTEIAGLEQN (190 aa). Cys-88 serves as the catalytic Nucleophile. Residues His-174 and Glu-176 contribute to the active site. Positions 201–399 constitute a GMPS ATP-PPase domain; that stretch reads WTAANIAEEL…LGLPEEIVNR (199 aa). 229–235 is a binding site for ATP; that stretch reads SGGVDSA.

In terms of assembly, homodimer.

The catalysed reaction is XMP + L-glutamine + ATP + H2O = GMP + L-glutamate + AMP + diphosphate + 2 H(+). It participates in purine metabolism; GMP biosynthesis; GMP from XMP (L-Gln route): step 1/1. Functionally, catalyzes the synthesis of GMP from XMP. The chain is GMP synthase [glutamine-hydrolyzing] from Corynebacterium diphtheriae (strain ATCC 700971 / NCTC 13129 / Biotype gravis).